We begin with the raw amino-acid sequence, 1483 residues long: ABC multidrug transporter atrA (1483 aa).

The segment covering 1 to 19 has biased composition (basic and acidic residues); that stretch reads MASHKKSEDPLVVKDRQEQ. The disordered stretch occupies residues 1–92; that stretch reads MASHKKSEDP…NDPAVDPQGP (92 aa). An N-linked (GlcNAc...) asparagine glycan is attached at asparagine 32. Over residues 71–82 the composition is skewed to polar residues; it reads PTRTSTLATISE. Residues asparagine 123 and asparagine 322 are each glycosylated (N-linked (GlcNAc...) asparagine). An ABC transporter 1 domain is found at 147 to 398; sequence FRIGEMMKNR…FERQGWECPQ (252 aa). Helical transmembrane passes span 512-532, 539-559, 595-615, 620-640, and 654-674; these read TVSTVISQIIMALIIGSVFYG, GFTAKGATLFFAVLLNALIAM, IPVKFVIAVVFNLILYFLAGL, GQFFLYLLVTFIVMFVMSAVF, and MGLAGILILALIVYTGFVLPV. Asparagine 718 carries N-linked (GlcNAc...) asparagine glycosylation. The helical transmembrane segment at 759-779 threads the bilayer; it reads FGILIAFLVGFMMIYFIATEL. N-linked (GlcNAc...) asparagine glycosylation occurs at asparagine 780. The ABC transporter 2 domain maps to 840–1083; that stretch reads FTWRDVCYDI…LLNYFESNGA (244 aa). Residue 876 to 883 participates in ATP binding; the sequence is GVSGAGKT. N-linked (GlcNAc...) asparagine glycosylation is found at asparagine 947 and asparagine 1146. 5 consecutive transmembrane segments (helical) span residues 1179-1199, 1215-1235, 1254-1274, 1293-1313, and 1320-1340; these read YIASKWVLGILSGLFIGFSFF, LFMLCSIFSSLVQQVMPLFVT, AFLIANIIVEIPYQIMMGILT, LVLLLCIQFFIYASTFAHMAI, and ETASAIVVLLFAMSLTFCGVM. An N-linked (GlcNAc...) asparagine glycan is attached at asparagine 1413. A helical membrane pass occupies residues 1444-1464; sequence FGLMWVYIVFNIFLATMLYYT. N-linked (GlcNAc...) asparagine glycosylation occurs at asparagine 1471.

It belongs to the ABC transporter superfamily. ABCG family. PDR (TC 3.A.1.205) subfamily.

It is found in the cell membrane. The enzyme catalyses (R)-miconazole(in) + ATP + H2O = (R)-miconazole(out) + ADP + phosphate + H(+). Functionally, pleiotropic ABC efflux transporter involved in the basal level of azole susceptibility. Confers resistance to miconazole and clotrimazole. The chain is ABC multidrug transporter atrA from Aspergillus oryzae (strain ATCC 42149 / RIB 40) (Yellow koji mold).